A 136-amino-acid polypeptide reads, in one-letter code: Small ribosomal subunit protein eS17B (136 aa).

It belongs to the eukaryotic ribosomal protein eS17 family. In terms of assembly, component of the small ribosomal subunit (SSU). Mature yeast ribosomes consist of a small (40S) and a large (60S) subunit. The 40S small subunit contains 1 molecule of ribosomal RNA (18S rRNA) and 33 different proteins (encoded by 57 genes). The large 60S subunit contains 3 rRNA molecules (25S, 5.8S and 5S rRNA) and 46 different proteins (encoded by 81 genes).

The protein localises to the cytoplasm. Component of the ribosome, a large ribonucleoprotein complex responsible for the synthesis of proteins in the cell. The small ribosomal subunit (SSU) binds messenger RNAs (mRNAs) and translates the encoded message by selecting cognate aminoacyl-transfer RNA (tRNA) molecules. The large subunit (LSU) contains the ribosomal catalytic site termed the peptidyl transferase center (PTC), which catalyzes the formation of peptide bonds, thereby polymerizing the amino acids delivered by tRNAs into a polypeptide chain. The nascent polypeptides leave the ribosome through a tunnel in the LSU and interact with protein factors that function in enzymatic processing, targeting, and the membrane insertion of nascent chains at the exit of the ribosomal tunnel. The polypeptide is Small ribosomal subunit protein eS17B (Saccharomyces cerevisiae (strain ATCC 204508 / S288c) (Baker's yeast)).